The primary structure comprises 282 residues: Protein NEOXANTHIN-DEFICIENT 1 (282 aa).

Functionally, required for neoxanthin biosynthesis. Probably not involved directly in the enzymatic conversion of violaxanthin to neoxanthin. Is necessary but not sufficient for neoxanthin synthesis. The polypeptide is Protein NEOXANTHIN-DEFICIENT 1 (Arabidopsis thaliana (Mouse-ear cress)).